Here is a 126-residue protein sequence, read N- to C-terminus: Large ribosomal subunit protein bL12 (126 aa).

Belongs to the bacterial ribosomal protein bL12 family. As to quaternary structure, homodimer. Part of the ribosomal stalk of the 50S ribosomal subunit. Forms a multimeric L10(L12)X complex, where L10 forms an elongated spine to which 2 to 4 L12 dimers bind in a sequential fashion. Binds GTP-bound translation factors.

Forms part of the ribosomal stalk which helps the ribosome interact with GTP-bound translation factors. Is thus essential for accurate translation. The polypeptide is Large ribosomal subunit protein bL12 (Blochmanniella floridana).